Consider the following 25-residue polypeptide: Large ribosomal subunit protein uL30 (25 aa).

It belongs to the universal ribosomal protein uL30 family. As to quaternary structure, part of the 50S ribosomal subunit.

The protein is Large ribosomal subunit protein uL30 (rpmD) of Pseudomonas fluorescens biotype A.